The primary structure comprises 323 residues: o-succinylbenzoate synthase (323 aa).

Lys-134 (proton donor) is an active-site residue. Asp-162, Glu-191, and Asp-214 together coordinate Mg(2+). The active-site Proton acceptor is the Lys-236.

The protein belongs to the mandelate racemase/muconate lactonizing enzyme family. MenC type 1 subfamily. It depends on a divalent metal cation as a cofactor.

It catalyses the reaction (1R,6R)-6-hydroxy-2-succinyl-cyclohexa-2,4-diene-1-carboxylate = 2-succinylbenzoate + H2O. The protein operates within quinol/quinone metabolism; 1,4-dihydroxy-2-naphthoate biosynthesis; 1,4-dihydroxy-2-naphthoate from chorismate: step 4/7. Its pathway is quinol/quinone metabolism; menaquinone biosynthesis. In terms of biological role, converts 2-succinyl-6-hydroxy-2,4-cyclohexadiene-1-carboxylate (SHCHC) to 2-succinylbenzoate (OSB). The polypeptide is o-succinylbenzoate synthase (Yersinia pseudotuberculosis serotype IB (strain PB1/+)).